Consider the following 283-residue polypeptide: NAD kinase (283 aa).

The active-site Proton acceptor is D66. Residues 66–67, 134–135, R145, R163, D165, and 176–181 contribute to the NAD(+) site; these read DG, ND, and TAYSMS.

Belongs to the NAD kinase family. A divalent metal cation is required as a cofactor.

Its subcellular location is the cytoplasm. It catalyses the reaction NAD(+) + ATP = ADP + NADP(+) + H(+). In terms of biological role, involved in the regulation of the intracellular balance of NAD and NADP, and is a key enzyme in the biosynthesis of NADP. Catalyzes specifically the phosphorylation on 2'-hydroxyl of the adenosine moiety of NAD to yield NADP. In Chlorobaculum tepidum (strain ATCC 49652 / DSM 12025 / NBRC 103806 / TLS) (Chlorobium tepidum), this protein is NAD kinase.